The sequence spans 250 residues: Probable transcriptional regulatory protein Mmc1_0479 (250 aa).

Belongs to the TACO1 family.

It is found in the cytoplasm. The polypeptide is Probable transcriptional regulatory protein Mmc1_0479 (Magnetococcus marinus (strain ATCC BAA-1437 / JCM 17883 / MC-1)).